We begin with the raw amino-acid sequence, 277 residues long: Myelin proteolipid protein (277 aa).

At 1-10 (MGLLECCARC) the chain is on the cytoplasmic side. Residues Cys-6, Cys-7, and Cys-10 are each lipidated (S-palmitoyl cysteine). Residues 11–36 (LVGAPFASLVATGLCFFGVALFCGCG) traverse the membrane as a helical segment. At 37–59 (HEALTGTEKLIETYFSKNYQDYE) the chain is on the extracellular side. The chain crosses the membrane as a helical span at residues 60–88 (YLINVIHAFQYVIYGTASFFFLYGALLLA). The Cytoplasmic segment spans residues 89–151 (EGFYTTGAVR…LGKWLGHPDK (63 aa)). Cys-109 is lipidated: S-palmitoyl cysteine. Ser-114 is subject to Phosphoserine. A phosphothreonine mark is found at Thr-116 and Thr-118. Cys-141 is lipidated: S-palmitoyl cysteine. Residues 152–178 (FVGITYALTVVWLLVFACSAVPVYIYF) form a helical membrane-spanning segment. Residues 179–238 (NTWTTCQSIAFPSKTSASIGSLCADARMYGVLPWNAFPGKVCGSNLLSICKTAEFQMTFH) lie on the Extracellular side of the membrane. Disulfide bonds link Cys-184-Cys-228 and Cys-201-Cys-220. The O-palmitoyl serine moiety is linked to residue Ser-199. A helical membrane pass occupies residues 239-268 (LFIAAFVGAAATLISLLTFMIAATYNFAVL). At 269–277 (KLMGRGTKF) the chain is on the cytoplasmic side.

This sequence belongs to the myelin proteolipid protein family.

The protein localises to the cell membrane. Its subcellular location is the myelin membrane. Its function is as follows. This is the major myelin protein from the central nervous system. It plays an important role in the formation or maintenance of the multilamellar structure of myelin. In Macaca fascicularis (Crab-eating macaque), this protein is Myelin proteolipid protein (PLP1).